The following is a 336-amino-acid chain: Foldase protein PrsA (336 aa).

The N-terminal stretch at 1 to 22 (MKSAKKLLSVLCLGIFILTFTA) is a signal peptide. Cys-23 is lipidated: N-palmitoyl cysteine. The S-diacylglycerol cysteine moiety is linked to residue Cys-23. Residues 194–286 (PNTMNVSHIL…FGYHIIKINS (93 aa)) form the PpiC domain.

This sequence belongs to the PrsA family.

Its subcellular location is the cell membrane. It carries out the reaction [protein]-peptidylproline (omega=180) = [protein]-peptidylproline (omega=0). Functionally, plays a major role in protein secretion by helping the post-translocational extracellular folding of several secreted proteins. The polypeptide is Foldase protein PrsA (Clostridium botulinum (strain 657 / Type Ba4)).